Here is a 565-residue protein sequence, read N- to C-terminus: Membrane protein insertase YidC (565 aa).

A run of 6 helical transmembrane segments spans residues 6-26, 348-368, 370-390, 437-457, 479-499, and 516-536; these read VLLI…WGKN, LMAL…SLLH, WGWA…PLSA, GGCF…WVLV, PYFI…KLTP, and PLIF…YWVI.

The protein belongs to the OXA1/ALB3/YidC family. Type 1 subfamily. As to quaternary structure, interacts with the Sec translocase complex via SecD. Specifically interacts with transmembrane segments of nascent integral membrane proteins during membrane integration.

The protein resides in the cell inner membrane. Functionally, required for the insertion and/or proper folding and/or complex formation of integral membrane proteins into the membrane. Involved in integration of membrane proteins that insert both dependently and independently of the Sec translocase complex, as well as at least some lipoproteins. Aids folding of multispanning membrane proteins. The sequence is that of Membrane protein insertase YidC from Xylella fastidiosa (strain M12).